The following is a 262-amino-acid chain: Shikimate dehydrogenase (NADP(+)) (262 aa).

Shikimate is bound by residues 15 to 17 (SRS) and Thr-62. Lys-66 acts as the Proton acceptor in catalysis. Glu-78 serves as a coordination point for NADP(+). Shikimate-binding residues include Asn-87 and Asp-102. NADP(+)-binding positions include 126–130 (GAGGA), 150–155 (NRTLAR), and Met-214. Tyr-216 provides a ligand contact to shikimate. Gly-236 provides a ligand contact to NADP(+).

It belongs to the shikimate dehydrogenase family. Homodimer.

It carries out the reaction shikimate + NADP(+) = 3-dehydroshikimate + NADPH + H(+). It participates in metabolic intermediate biosynthesis; chorismate biosynthesis; chorismate from D-erythrose 4-phosphate and phosphoenolpyruvate: step 4/7. Functionally, involved in the biosynthesis of the chorismate, which leads to the biosynthesis of aromatic amino acids. Catalyzes the reversible NADPH linked reduction of 3-dehydroshikimate (DHSA) to yield shikimate (SA). The sequence is that of Shikimate dehydrogenase (NADP(+)) from Acinetobacter baumannii (strain ACICU).